The following is a 337-amino-acid chain: MRDPVTDFEYPAAWVAACRSPDLLDDVRRGLAVLTASGTVLRRGFSTGTTAAAACKAAILSLACDTVREVDVTLPCGIAVRLAVDGYRGQASCRKDAGDYTADVTGGLEFVAMAAPSLSGGVQFVPGEGIGSFARDTPRHRRGTPAISAPALDCIRRSIDEAVEEADLSGTTVILTIPRGAEVAQKTLNPRVGVHGGISVLGTTGFVEPWDDHMTEGVIDRIARAPGAVVLTTGRLGLRYSRLLFPEHEAILVGNKLEEALRAVEGDAVICGLPGLILKFMNPDVLSGTGCVTVEELSATPLWEETVRRELAAFRARYPRVRVVIVDRDGRIIGEPP.

This sequence belongs to the CbiD family.

It catalyses the reaction Co-precorrin-5B + S-adenosyl-L-methionine = Co-precorrin-6A + S-adenosyl-L-homocysteine. Its pathway is cofactor biosynthesis; adenosylcobalamin biosynthesis; cob(II)yrinate a,c-diamide from sirohydrochlorin (anaerobic route): step 6/10. In terms of biological role, catalyzes the methylation of C-1 in cobalt-precorrin-5B to form cobalt-precorrin-6A. This is Cobalt-precorrin-5B C(1)-methyltransferase from Methanoculleus marisnigri (strain ATCC 35101 / DSM 1498 / JR1).